Reading from the N-terminus, the 448-residue chain is tRNA(Ile)-lysidine synthase (448 aa).

Residue 29–34 (SGGVDS) participates in ATP binding.

The protein belongs to the tRNA(Ile)-lysidine synthase family.

It is found in the cytoplasm. It carries out the reaction cytidine(34) in tRNA(Ile2) + L-lysine + ATP = lysidine(34) in tRNA(Ile2) + AMP + diphosphate + H(+). Its function is as follows. Ligates lysine onto the cytidine present at position 34 of the AUA codon-specific tRNA(Ile) that contains the anticodon CAU, in an ATP-dependent manner. Cytidine is converted to lysidine, thus changing the amino acid specificity of the tRNA from methionine to isoleucine. This chain is tRNA(Ile)-lysidine synthase, found in Azoarcus sp. (strain BH72).